Reading from the N-terminus, the 155-residue chain is Ubiquitin-conjugating enzyme E2 14 (155 aa).

The UBC core domain occupies 7 to 154; sequence SSSRRLTKEY…ARDYVEQFAK (148 aa). Cysteine 91 acts as the Glycyl thioester intermediate in catalysis.

This sequence belongs to the ubiquitin-conjugating enzyme family.

It catalyses the reaction S-ubiquitinyl-[E1 ubiquitin-activating enzyme]-L-cysteine + [E2 ubiquitin-conjugating enzyme]-L-cysteine = [E1 ubiquitin-activating enzyme]-L-cysteine + S-ubiquitinyl-[E2 ubiquitin-conjugating enzyme]-L-cysteine.. Its pathway is protein modification; protein ubiquitination. Its function is as follows. Catalyzes the covalent attachment of ubiquitin to other proteins. Mediates the selective degradation of short-lived and abnormal proteins. This is Ubiquitin-conjugating enzyme E2 14 (ubc14) from Schizosaccharomyces pombe (strain 972 / ATCC 24843) (Fission yeast).